Consider the following 114-residue polypeptide: MIKALFNKNTALAAVTILALSGGAMAESAKTHKTDMAKKKVSELTCEDFNGLEESFKPTVVGWVVGFNKKGKEEDAVIDVDGIETVTPAIIEACKQEPKASFWKKAEAELKKVF.

Positions 1-26 are cleaved as a signal peptide; it reads MIKALFNKNTALAAVTILALSGGAMA. Residues cysteine 46 and cysteine 94 are joined by a disulfide bond.

This sequence belongs to the HdeA family.

It is found in the periplasm. In terms of biological role, required for optimal acid stress protection. Exhibits a chaperone-like activity only at low pH by suppressing non-specifically the aggregation of denaturated periplasmic proteins. This chain is Probable acid stress chaperone HdeA, found in Brucella suis biovar 1 (strain 1330).